A 332-amino-acid chain; its full sequence is T-cell leukemia homeobox protein 1 (332 aa).

Residues 203-262 constitute a DNA-binding region (homeobox); the sequence is KKKPRTSFTRLQICELEKRFHRQKYLASAERAALAKALKMTDAQVKTWFQNRRTKWRRQT. An N6-acetyllysine modification is found at lysine 238.

As to expression, expressed in various embryonic tissues, including branchial arches, some component of the nervous system and spleen.

The protein localises to the nucleus. In terms of biological role, controls the genesis of the spleen. Binds to the DNA sequence 5'-GGCGGTAAGTGG-3'. This chain is T-cell leukemia homeobox protein 1 (Tlx1), found in Mus musculus (Mouse).